The sequence spans 265 residues: Hydroxyethylthiazole kinase (265 aa).

Methionine 50 contributes to the substrate binding site. 2 residues coordinate ATP: arginine 125 and threonine 171. Glycine 198 is a binding site for substrate.

The protein belongs to the Thz kinase family. It depends on Mg(2+) as a cofactor.

The enzyme catalyses 5-(2-hydroxyethyl)-4-methylthiazole + ATP = 4-methyl-5-(2-phosphooxyethyl)-thiazole + ADP + H(+). It functions in the pathway cofactor biosynthesis; thiamine diphosphate biosynthesis; 4-methyl-5-(2-phosphoethyl)-thiazole from 5-(2-hydroxyethyl)-4-methylthiazole: step 1/1. In terms of biological role, catalyzes the phosphorylation of the hydroxyl group of 4-methyl-5-beta-hydroxyethylthiazole (THZ). In Salmonella arizonae (strain ATCC BAA-731 / CDC346-86 / RSK2980), this protein is Hydroxyethylthiazole kinase.